The primary structure comprises 551 residues: DNA ligase (551 aa).

E246 is a binding site for ATP. The N6-AMP-lysine intermediate role is filled by K248. R253, R268, E298, F337, R414, and K420 together coordinate ATP.

This sequence belongs to the ATP-dependent DNA ligase family. The cofactor is Mg(2+).

The enzyme catalyses ATP + (deoxyribonucleotide)n-3'-hydroxyl + 5'-phospho-(deoxyribonucleotide)m = (deoxyribonucleotide)n+m + AMP + diphosphate.. DNA ligase that seals nicks in double-stranded DNA during DNA replication, DNA recombination and DNA repair. This Methanobrevibacter smithii (strain ATCC 35061 / DSM 861 / OCM 144 / PS) protein is DNA ligase.